Consider the following 379-residue polypeptide: MAKRDYYEVLGVGKNASDDEIKKAYRKLAMKYHPDRNPDSKESEEKFKEVKEAYEMLSDAEKKAAYDQYGHAGVDPNMAGGFGGGQGYGGFAEAFGDIFGDIFGQQAGGGRRGGGGPQAYRGADLRYSMEISLEQAAHGHEAQIRVPHWDDCDHCHGNGAEPGSSVETCPTCHGAGQVRVSQGFFSMQQTCPKCHGSGKFIPKPCTKCHGQGKLKSQKTLEVKIPAGIDEGMRIRSSGNGEPGINGGPPGDLYVEVHIKAHPVFERDGDDLHCQMPISFATAALGGDLEVPTLNGKATFPVPEATQSGKTFRLRGKGIKGVRSGYPGDLYVHVNVETPVKLTEAQKDMLRQFDRSVHEGGSRHSPQEQSWLDKVKSFFS.

The J domain occupies 5–70; it reads DYYEVLGVGK…EKKAAYDQYG (66 aa). Residues 139 to 217 form a CR-type zinc finger; it reads GHEAQIRVPH…CHGQGKLKSQ (79 aa). Cys152, Cys155, Cys169, Cys172, Cys191, Cys194, Cys205, and Cys208 together coordinate Zn(2+). CXXCXGXG motif repeat units follow at residues 152–159, 169–176, 191–198, and 205–212; these read CDHCHGNG, CPTCHGAG, CPKCHGSG, and CTKCHGQG. A disordered region spans residues 356-379; that stretch reads VHEGGSRHSPQEQSWLDKVKSFFS.

The protein belongs to the DnaJ family. In terms of assembly, homodimer. Requires Zn(2+) as cofactor.

The protein resides in the cytoplasm. Participates actively in the response to hyperosmotic and heat shock by preventing the aggregation of stress-denatured proteins and by disaggregating proteins, also in an autonomous, DnaK-independent fashion. Unfolded proteins bind initially to DnaJ; upon interaction with the DnaJ-bound protein, DnaK hydrolyzes its bound ATP, resulting in the formation of a stable complex. GrpE releases ADP from DnaK; ATP binding to DnaK triggers the release of the substrate protein, thus completing the reaction cycle. Several rounds of ATP-dependent interactions between DnaJ, DnaK and GrpE are required for fully efficient folding. Also involved, together with DnaK and GrpE, in the DNA replication of plasmids through activation of initiation proteins. The chain is Chaperone protein DnaJ from Cupriavidus pinatubonensis (strain JMP 134 / LMG 1197) (Cupriavidus necator (strain JMP 134)).